A 398-amino-acid polypeptide reads, in one-letter code: Phosphoglycerate kinase (398 aa).

Substrate is bound by residues 21-23, arginine 36, 59-62, arginine 119, and arginine 157; these read DFN and HLGR. Residues lysine 208, glycine 296, glutamate 327, and 354-357 contribute to the ATP site; that span reads GGDS.

Belongs to the phosphoglycerate kinase family. In terms of assembly, monomer.

Its subcellular location is the cytoplasm. The enzyme catalyses (2R)-3-phosphoglycerate + ATP = (2R)-3-phospho-glyceroyl phosphate + ADP. Its pathway is carbohydrate degradation; glycolysis; pyruvate from D-glyceraldehyde 3-phosphate: step 2/5. The sequence is that of Phosphoglycerate kinase from Streptococcus sanguinis (strain SK36).